A 512-amino-acid polypeptide reads, in one-letter code: Alanine--glyoxylate aminotransferase 2, mitochondrial (512 aa).

The transit peptide at 1 to 39 (MSLAWRTLQKAFYLETSLRILQMRPSLSCASRIYVPKLT) directs the protein to the mitochondrion. Residue Lys55 is modified to N6-acetyllysine. Position 69 is an N6-acetyllysine; alternate (Lys69). An N6-succinyllysine; alternate modification is found at Lys69. Lys82 carries the N6-acetyllysine modification. At Lys260 the chain carries N6-acetyllysine; alternate. Lys260 carries the N6-succinyllysine; alternate modification. An N6-succinyllysine modification is found at Lys302. An N6-(pyridoxal phosphate)lysine modification is found at Lys348. 2 positions are modified to N6-acetyllysine; alternate: Lys415 and Lys418. An N6-succinyllysine; alternate mark is found at Lys415 and Lys418. At Lys452 the chain carries N6-acetyllysine.

It belongs to the class-III pyridoxal-phosphate-dependent aminotransferase family. As to quaternary structure, homotetramer. It depends on pyridoxal 5'-phosphate as a cofactor. Expressed in the liver, lung and kidney.

It is found in the mitochondrion. The catalysed reaction is glyoxylate + L-alanine = glycine + pyruvate. It catalyses the reaction (R)-3-amino-2-methylpropanoate + pyruvate = 2-methyl-3-oxopropanoate + L-alanine. The enzyme catalyses 3-oxopropanoate + L-alanine = beta-alanine + pyruvate. It carries out the reaction 2-oxobutanoate + L-alanine = (2S)-2-aminobutanoate + pyruvate. The catalysed reaction is N(omega),N(omega)-dimethyl-L-arginine + pyruvate = 5-(3,3-dimethylguanidino)-2-oxopentanoate + L-alanine. It catalyses the reaction N(omega),N('omega)-dimethyl-L-arginine + pyruvate = 5-(3,3'-dimethylguanidino)-2-oxopentanoate + L-alanine. The enzyme catalyses N(omega),N(omega)-dimethyl-L-arginine + glyoxylate = 5-(3,3-dimethylguanidino)-2-oxopentanoate + glycine. It carries out the reaction N(omega),N('omega)-dimethyl-L-arginine + glyoxylate = 5-(3,3'-dimethylguanidino)-2-oxopentanoate + glycine. The catalysed reaction is N(omega)-methyl-L-arginine + pyruvate = 5-(3-methylguanidino)-2-oxopentanoate + L-alanine. It catalyses the reaction N(omega)-methyl-L-arginine + glyoxylate = 5-(3-methylguanidino)-2-oxopentanoate + glycine. The enzyme catalyses L-ornithine + pyruvate = 5-amino-2-oxopentanoate + L-alanine. It carries out the reaction L-ornithine + glyoxylate = 5-amino-2-oxopentanoate + glycine. The catalysed reaction is (2S)-2-aminobutanoate + glyoxylate = 2-oxobutanoate + glycine. It catalyses the reaction N(omega),N(omega)-dimethyl-L-arginine + oxaloacetate = 5-(3,3-dimethylguanidino)-2-oxopentanoate + L-aspartate. The enzyme catalyses oxaloacetate + L-alanine = L-aspartate + pyruvate. It carries out the reaction N(omega),N(omega)-dimethyl-L-arginine + 2-oxobutanoate = 5-(3,3-dimethylguanidino)-2-oxopentanoate + (2S)-2-aminobutanoate. The catalysed reaction is 2-oxopentanoate + N(omega),N(omega)-dimethyl-L-arginine = 5-(3,3-dimethylguanidino)-2-oxopentanoate + L-2-aminopentanoate. It catalyses the reaction 2-oxohexanoate + N(omega),N(omega)-dimethyl-L-arginine = L-2-aminohexanoate + 5-(3,3-dimethylguanidino)-2-oxopentanoate. Inhibited by 5-fluorouracil and 6-fluorouracil. Inhibited by phenylhydrazine, hydroxylamine, l-amino-L-proline, para-chloromercuribenzoate and HgCl2. In terms of biological role, multifunctional aminotransferase with a broad substrate specificity. Catalyzes the conversion of glyoxylate to glycine using alanine as the amino donor. Catalyzes metabolism of not L- but the D-isomer of D-beta-aminoisobutyric acid to generate 2-methyl-3-oxopropanoate and alanine. Catalyzes the transfer of the amino group from beta-alanine to pyruvate to yield L-alanine and 3-oxopropanoate. Can metabolize NG-monomethyl-L-arginine (NMMA), asymmetric NG,NG-dimethyl-L-arginine (ADMA) and symmetric NG,N'G-dimethyl-L-arginine (SDMA). ADMA is a potent inhibitor of nitric-oxide (NO) synthase, and this activity provides mechanism through which the kidney regulates blood pressure. This Rattus norvegicus (Rat) protein is Alanine--glyoxylate aminotransferase 2, mitochondrial (Agxt2).